The chain runs to 418 residues: Actin-like protein C08B11.6 (418 aa).

The protein belongs to the actin family. ARP6 subfamily.

The protein localises to the cytoplasm. Its subcellular location is the cytoskeleton. The polypeptide is Actin-like protein C08B11.6 (arp-6) (Caenorhabditis elegans).